The chain runs to 175 residues: Peptidyl-prolyl cis-trans isomerase B (175 aa).

One can recognise a PPIase cyclophilin-type domain in the interval 3–172; sequence EQLYATLKTN…EDVVIESVVV (170 aa).

Belongs to the cyclophilin-type PPIase family.

The protein localises to the cytoplasm. The catalysed reaction is [protein]-peptidylproline (omega=180) = [protein]-peptidylproline (omega=0). With respect to regulation, inhibited by cyclosporin A (CsA). Functionally, PPIases accelerate the folding of proteins. It catalyzes the cis-trans isomerization of proline imidic peptide bonds in oligopeptides. This is Peptidyl-prolyl cis-trans isomerase B (cypB) from Streptomyces anulatus (Streptomyces chrysomallus).